The sequence spans 335 residues: 4-hydroxy-3-methylbut-2-enyl diphosphate reductase 2 (335 aa).

C37 contacts [4Fe-4S] cluster. The (2E)-4-hydroxy-3-methylbut-2-enyl diphosphate site is built by H66 and H99. The dimethylallyl diphosphate site is built by H66 and H99. Residues H66 and H99 each coordinate isopentenyl diphosphate. Residue C121 participates in [4Fe-4S] cluster binding. Residue H149 participates in (2E)-4-hydroxy-3-methylbut-2-enyl diphosphate binding. H149 is a binding site for dimethylallyl diphosphate. Position 149 (H149) interacts with isopentenyl diphosphate. E151 (proton donor) is an active-site residue. T189 serves as a coordination point for (2E)-4-hydroxy-3-methylbut-2-enyl diphosphate. C219 lines the [4Fe-4S] cluster pocket. (2E)-4-hydroxy-3-methylbut-2-enyl diphosphate is bound by residues S247, S248, N249, and S292. 4 residues coordinate dimethylallyl diphosphate: S247, S248, N249, and S292. Residues S247, S248, N249, and S292 each coordinate isopentenyl diphosphate.

It belongs to the IspH family. [4Fe-4S] cluster serves as cofactor.

The enzyme catalyses isopentenyl diphosphate + 2 oxidized [2Fe-2S]-[ferredoxin] + H2O = (2E)-4-hydroxy-3-methylbut-2-enyl diphosphate + 2 reduced [2Fe-2S]-[ferredoxin] + 2 H(+). It carries out the reaction dimethylallyl diphosphate + 2 oxidized [2Fe-2S]-[ferredoxin] + H2O = (2E)-4-hydroxy-3-methylbut-2-enyl diphosphate + 2 reduced [2Fe-2S]-[ferredoxin] + 2 H(+). The protein operates within isoprenoid biosynthesis; dimethylallyl diphosphate biosynthesis; dimethylallyl diphosphate from (2E)-4-hydroxy-3-methylbutenyl diphosphate: step 1/1. It participates in isoprenoid biosynthesis; isopentenyl diphosphate biosynthesis via DXP pathway; isopentenyl diphosphate from 1-deoxy-D-xylulose 5-phosphate: step 6/6. In terms of biological role, catalyzes the conversion of 1-hydroxy-2-methyl-2-(E)-butenyl 4-diphosphate (HMBPP) into a mixture of isopentenyl diphosphate (IPP) and dimethylallyl diphosphate (DMAPP). Acts in the terminal step of the DOXP/MEP pathway for isoprenoid precursor biosynthesis. Has a higher activity compared with LytB2. Is essential for M.tuberculosis growth in vitro. This Mycobacterium tuberculosis (strain ATCC 25618 / H37Rv) protein is 4-hydroxy-3-methylbut-2-enyl diphosphate reductase 2.